A 253-amino-acid chain; its full sequence is Anamorsin homolog (253 aa).

Residues 4-129 (FKGLQKSLYI…ETGSSARLSF (126 aa)) form an N-terminal SAM-like domain region. Residues 130–161 (AKKNSSTLNVWKISGDDDELIDEEDLLDEVDK) form a linker region. Residues Cys172, Cys181, Cys184, and Cys186 each coordinate [2Fe-2S] cluster. The interval 172–186 (CSTTGKRKACKNCSC) is fe-S binding site A. [4Fe-4S] cluster is bound by residues Cys214, Cys217, Cys225, and Cys228. 2 consecutive short sequence motifs (cx2C motif) follow at residues 214 to 217 (CGNC) and 225 to 228 (CSSC). The segment at 214 to 228 (CGNCYLGDAFRCSSC) is fe-S binding site B.

This sequence belongs to the anamorsin family. In terms of assembly, monomer. The cofactor is [2Fe-2S] cluster. [4Fe-4S] cluster serves as cofactor.

Its subcellular location is the cytoplasm. It localises to the mitochondrion intermembrane space. In terms of biological role, component of the cytosolic iron-sulfur (Fe-S) protein assembly (CIA) machinery. Required for the maturation of extramitochondrial Fe-S proteins. Part of an electron transfer chain functioning in an early step of cytosolic Fe-S biogenesis, facilitating the de novo assembly of a [4Fe-4S] cluster on the cytosolic Fe-S scaffold complex. Electrons are transferred from NADPH via a FAD- and FMN-containing diflavin oxidoreductase. Together with the diflavin oxidoreductase, also required for the assembly of the diferric tyrosyl radical cofactor of ribonucleotide reductase (RNR), probably by providing electrons for reduction during radical cofactor maturation in the catalytic small subunit. This Drosophila willistoni (Fruit fly) protein is Anamorsin homolog.